We begin with the raw amino-acid sequence, 417 residues long: Gamma-glutamyl phosphate reductase (417 aa).

This sequence belongs to the gamma-glutamyl phosphate reductase family.

Its subcellular location is the cytoplasm. The catalysed reaction is L-glutamate 5-semialdehyde + phosphate + NADP(+) = L-glutamyl 5-phosphate + NADPH + H(+). It participates in amino-acid biosynthesis; L-proline biosynthesis; L-glutamate 5-semialdehyde from L-glutamate: step 2/2. Functionally, catalyzes the NADPH-dependent reduction of L-glutamate 5-phosphate into L-glutamate 5-semialdehyde and phosphate. The product spontaneously undergoes cyclization to form 1-pyrroline-5-carboxylate. The polypeptide is Gamma-glutamyl phosphate reductase (Chlorobium phaeobacteroides (strain BS1)).